Consider the following 338-residue polypeptide: Methionine synthase (338 aa).

His-210, Cys-212, Glu-234, and Cys-294 together coordinate Zn(2+).

The protein belongs to the archaeal MetE family. Zn(2+) serves as cofactor.

It participates in amino-acid biosynthesis; L-methionine biosynthesis via de novo pathway. Its function is as follows. Catalyzes the transfer of a methyl group to L-homocysteine resulting in methionine formation. The physiological methyl donor is unknown. The sequence is that of Methionine synthase from Pyrococcus horikoshii (strain ATCC 700860 / DSM 12428 / JCM 9974 / NBRC 100139 / OT-3).